A 424-amino-acid polypeptide reads, in one-letter code: Probable threonylcarbamoyladenosine tRNA methylthiotransferase (424 aa).

In terms of domain architecture, MTTase N-terminal spans 4 to 115 (IRVYIETFGC…APQAVRAASN (112 aa)). [4Fe-4S] cluster-binding residues include Cys13, Cys48, Cys79, Cys150, Cys154, and Cys157. The Radical SAM core domain occupies 136-365 (RSNPLIHIIP…EELKMRITEE (230 aa)). In terms of domain architecture, TRAM spans 368–424 (RRLVGSFQEILVVERGRKGGFIGRTGSYIPVVTETGEPGSFRRVRIRDATGTYLLAD).

Belongs to the methylthiotransferase family. CDKAL1 subfamily. The cofactor is [4Fe-4S] cluster.

It catalyses the reaction N(6)-L-threonylcarbamoyladenosine(37) in tRNA + (sulfur carrier)-SH + AH2 + 2 S-adenosyl-L-methionine = 2-methylsulfanyl-N(6)-L-threonylcarbamoyladenosine(37) in tRNA + (sulfur carrier)-H + 5'-deoxyadenosine + L-methionine + A + S-adenosyl-L-homocysteine + 2 H(+). Its function is as follows. Catalyzes the methylthiolation of N6-threonylcarbamoyladenosine (t(6)A), leading to the formation of 2-methylthio-N6-threonylcarbamoyladenosine (ms(2)t(6)A) at position 37 in tRNAs that read codons beginning with adenine. This Methanothermobacter thermautotrophicus (strain ATCC 29096 / DSM 1053 / JCM 10044 / NBRC 100330 / Delta H) (Methanobacterium thermoautotrophicum) protein is Probable threonylcarbamoyladenosine tRNA methylthiotransferase.